The sequence spans 222 residues: Charged multivesicular body protein 3 (222 aa).

Gly2 carries the N-myristoyl glycine lipid modification. An intramolecular interaction with C-terminus region spans residues 2–113; the sequence is GLFGKTQEKP…LQKSTEVMKA (112 aa). The stretch at 22–54 forms a coiled coil; that stretch reads KIRKEMRVVDRQIRDIQREEEKVKRSVKDAAKK. 2 important for autoinhibitory function regions span residues 59–64 and 168–169; these read VCVVLA and IL. Residues 141–222 adopt a coiled-coil conformation; the sequence is EEMLEDTFES…MQSRLATLRS (82 aa). The intramolecular interaction with N-terminus stretch occupies residues 151 to 220; the sequence is MDDQEEMEEE…EAMQSRLATL (70 aa). The interaction with VPS4A stretch occupies residues 151–222; sequence MDDQEEMEEE…MQSRLATLRS (72 aa). Lys179 participates in a covalent cross-link: Glycyl lysine isopeptide (Lys-Gly) (interchain with G-Cter in ubiquitin). Residues 180-222 are disordered; that stretch reads APSKVTDALPEPEPSGAMAASEDEEEEEEALEAMQSRLATLRS. Interaction with STAMBP stretches follow at residues 196–222, 203–207, and 221–222; these read AMAA…TLRS, EEEEE, and RS. At Ser200 the chain carries Phosphoserine. Residues 200-210 show a composition bias toward acidic residues; that stretch reads SEDEEEEEEAL. The MIT-interacting motif motif lies at 201–211; the sequence is EDEEEEEEALE.

Belongs to the SNF7 family. Probable core component of the endosomal sorting required for transport complex III (ESCRT-III). ESCRT-III components are thought to multimerize to form a flat lattice on the perimeter membrane of the endosome. Several assembly forms of ESCRT-III may exist that interact and act sequentially. Forms a metastable monomer in solution; its core structure (without part of the putative autoinhibitory C-terminal acidic region) oligomerizes into a flat lattice via two different dimerization interfaces. In vitro, heteromerizes with CHMP2A (but not CHMP4) to form helical tubular structures that expose membrane-interacting sites on the outside whereas VPS4B can associate on the inside of the tubule. May interact with IGFBP7; the relevance of such interaction however remains unclear. Interacts with CHMP2A. Interacts with CHMP4A; the interaction requires the release of CHMP4A autoinhibition. Interacts with VPS4A. Interacts with STAMBP; the interaction appears to relieve the autoinhibition of CHMP3. Interacts with VTA1.

The protein resides in the cytoplasm. The protein localises to the cytosol. It is found in the membrane. Its subcellular location is the endosome. It localises to the late endosome membrane. Its function is as follows. Probable core component of the endosomal sorting required for transport complex III (ESCRT-III) which is involved in multivesicular bodies (MVBs) formation and sorting of endosomal cargo proteins into MVBs. MVBs contain intraluminal vesicles (ILVs) that are generated by invagination and scission from the limiting membrane of the endosome and mostly are delivered to lysosomes enabling degradation of membrane proteins, such as stimulated growth factor receptors, lysosomal enzymes and lipids. The MVB pathway appears to require the sequential function of ESCRT-O, -I,-II and -III complexes. ESCRT-III proteins mostly dissociate from the invaginating membrane before the ILV is released. The ESCRT machinery also functions in topologically equivalent membrane fission events, such as the terminal stages of cytokinesis and the budding of enveloped viruses (lentiviruses). ESCRT-III proteins are believed to mediate the necessary vesicle extrusion and/or membrane fission activities, possibly in conjunction with the AAA ATPase VPS4. Selectively binds to phosphatidylinositol 3,5-bisphosphate PtdIns(3,5)P2 and PtdIns(3,4)P2 in preference to other phosphoinositides tested. Involved in late stages of cytokinesis. Plays a role in endosomal sorting/trafficking of EGF receptor. The protein is Charged multivesicular body protein 3 (CHMP3) of Pongo abelii (Sumatran orangutan).